A 474-amino-acid chain; its full sequence is 3-isopropylmalate dehydratase large subunit (474 aa).

The [4Fe-4S] cluster site is built by Cys-350, Cys-415, and Cys-418.

This sequence belongs to the aconitase/IPM isomerase family. LeuC type 1 subfamily. In terms of assembly, heterodimer of LeuC and LeuD. [4Fe-4S] cluster serves as cofactor.

The enzyme catalyses (2R,3S)-3-isopropylmalate = (2S)-2-isopropylmalate. It functions in the pathway amino-acid biosynthesis; L-leucine biosynthesis; L-leucine from 3-methyl-2-oxobutanoate: step 2/4. Its function is as follows. Catalyzes the isomerization between 2-isopropylmalate and 3-isopropylmalate, via the formation of 2-isopropylmaleate. This is 3-isopropylmalate dehydratase large subunit from Phenylobacterium zucineum (strain HLK1).